Consider the following 324-residue polypeptide: IDS-like terpene synthase 3 (324 aa).

Positions 77 and 81 each coordinate Mg(2+).

It belongs to the FPP/GGPP synthase family. It depends on Mg(2+) as a cofactor.

It carries out the reaction (2E)-geranyl diphosphate + H2O = linalool + diphosphate. The enzyme catalyses (2E,6E)-farnesyl diphosphate + H2O = (6E)-nerolidol + diphosphate. Its function is as follows. Terpene synthase that shows monoterpene synthase activity and produces linalool, using geranyl diphosphate (GPP) as substrate. Also shows sesquiterpene synthase activity as it is able to convert farnesyl diphosphate (FPP) into (E)-nerolidol. This is IDS-like terpene synthase 3 from Melampsora lini (Rust fungus).